The sequence spans 460 residues: tRNA modification GTPase MnmE (460 aa).

The (6S)-5-formyl-5,6,7,8-tetrahydrofolate site is built by arginine 26, glutamate 88, and arginine 127. Residues 222–381 form the TrmE-type G domain; that stretch reads GLKVAIVGRP…LESAILSKVQ (160 aa). Asparagine 232 serves as a coordination point for K(+). GTP-binding positions include 232 to 237, 251 to 257, and 276 to 279; these read NVGKSS, TELPGTT, and DTAG. Serine 236 provides a ligand contact to Mg(2+). K(+) contacts are provided by threonine 251, leucine 253, and threonine 256. Threonine 257 contacts Mg(2+). Position 460 (lysine 460) interacts with (6S)-5-formyl-5,6,7,8-tetrahydrofolate.

It belongs to the TRAFAC class TrmE-Era-EngA-EngB-Septin-like GTPase superfamily. TrmE GTPase family. Homodimer. Heterotetramer of two MnmE and two MnmG subunits. K(+) serves as cofactor.

It is found in the cytoplasm. Exhibits a very high intrinsic GTPase hydrolysis rate. Involved in the addition of a carboxymethylaminomethyl (cmnm) group at the wobble position (U34) of certain tRNAs, forming tRNA-cmnm(5)s(2)U34. The sequence is that of tRNA modification GTPase MnmE from Cyanothece sp. (strain PCC 7425 / ATCC 29141).